The sequence spans 270 residues: Triosephosphate isomerase (270 aa).

Residue 27 to 29 coordinates substrate; the sequence is NWK. The active-site Electrophile is the histidine 114. The active-site Proton acceptor is glutamate 184. Residues glycine 190, serine 230, and 251–252 each bind substrate; that span reads GG.

Belongs to the triosephosphate isomerase family. In terms of assembly, homodimer.

Its subcellular location is the cytoplasm. The enzyme catalyses D-glyceraldehyde 3-phosphate = dihydroxyacetone phosphate. It functions in the pathway carbohydrate biosynthesis; gluconeogenesis. It participates in carbohydrate degradation; glycolysis; D-glyceraldehyde 3-phosphate from glycerone phosphate: step 1/1. Functionally, involved in the gluconeogenesis. Catalyzes stereospecifically the conversion of dihydroxyacetone phosphate (DHAP) to D-glyceraldehyde-3-phosphate (G3P). The sequence is that of Triosephosphate isomerase from Chlamydia muridarum (strain MoPn / Nigg).